Reading from the N-terminus, the 110-residue chain is UPF0102 protein HH_1751 (110 aa).

Belongs to the UPF0102 family.

This chain is UPF0102 protein HH_1751, found in Helicobacter hepaticus (strain ATCC 51449 / 3B1).